The chain runs to 147 residues: Myoglobin (147 aa).

Positions Ala-2–Lys-141 constitute a Globin domain. His-60 provides a ligand contact to nitrite. An O2-binding site is contributed by His-60. His-89 provides a ligand contact to heme b.

Belongs to the globin family. In terms of assembly, monomeric.

Its subcellular location is the cytoplasm. The protein resides in the sarcoplasm. It catalyses the reaction Fe(III)-heme b-[protein] + nitric oxide + H2O = Fe(II)-heme b-[protein] + nitrite + 2 H(+). The enzyme catalyses H2O2 + AH2 = A + 2 H2O. Its function is as follows. Monomeric heme protein which primary function is to store oxygen and facilitate its diffusion within muscle tissues. Reversibly binds oxygen through a pentacoordinated heme iron and enables its timely and efficient release as needed during periods of heightened demand. Depending on the oxidative conditions of tissues and cells, and in addition to its ability to bind oxygen, it also has a nitrite reductase activity whereby it regulates the production of bioactive nitric oxide. Under stress conditions, like hypoxia and anoxia, it also protects cells against reactive oxygen species thanks to its pseudoperoxidase activity. In Sarda chiliensis (Pacific bonito), this protein is Myoglobin (mb).